Consider the following 164-residue polypeptide: Phosphopantetheine adenylyltransferase (164 aa).

S9 contacts substrate. ATP is bound by residues 9–10 and H17; that span reads SF. The substrate site is built by K41, V78, and R92. Residues 93-95, E103, and 128-134 contribute to the ATP site; these read GLR and SRPITAT.

Belongs to the bacterial CoaD family. In terms of assembly, homohexamer. Mg(2+) serves as cofactor.

It is found in the cytoplasm. It carries out the reaction (R)-4'-phosphopantetheine + ATP + H(+) = 3'-dephospho-CoA + diphosphate. It participates in cofactor biosynthesis; coenzyme A biosynthesis; CoA from (R)-pantothenate: step 4/5. In terms of biological role, reversibly transfers an adenylyl group from ATP to 4'-phosphopantetheine, yielding dephospho-CoA (dPCoA) and pyrophosphate. The chain is Phosphopantetheine adenylyltransferase from Sinorhizobium fredii (strain NBRC 101917 / NGR234).